Here is a 467-residue protein sequence, read N- to C-terminus: 3-isopropylmalate dehydratase large subunit (467 aa).

C347, C407, and C410 together coordinate [4Fe-4S] cluster.

It belongs to the aconitase/IPM isomerase family. LeuC type 1 subfamily. In terms of assembly, heterodimer of LeuC and LeuD. [4Fe-4S] cluster serves as cofactor.

The enzyme catalyses (2R,3S)-3-isopropylmalate = (2S)-2-isopropylmalate. The protein operates within amino-acid biosynthesis; L-leucine biosynthesis; L-leucine from 3-methyl-2-oxobutanoate: step 2/4. Catalyzes the isomerization between 2-isopropylmalate and 3-isopropylmalate, via the formation of 2-isopropylmaleate. The sequence is that of 3-isopropylmalate dehydratase large subunit from Synechococcus sp. (strain JA-2-3B'a(2-13)) (Cyanobacteria bacterium Yellowstone B-Prime).